We begin with the raw amino-acid sequence, 570 residues long: Putative diflavin flavoprotein A 6 (570 aa).

The tract at residues 38 to 231 (AKGTTANSYL…FPTRLYATGH (194 aa)) is zinc metallo-hydrolase. Residues 260 to 402 (VALIYASAYG…AGTDFAQALK (143 aa)) enclose the Flavodoxin-like domain. The flavodoxin-reductase-like stretch occupies residues 421-570 (VGRIVGSLCV…VHHRKSGNHY (150 aa)).

This sequence in the N-terminal section; belongs to the zinc metallo-hydrolase group 3 family. The protein in the C-terminal section; belongs to the flavodoxin reductase family. Fe cation serves as cofactor.

Mediates electron transfer from NADH to oxygen, reducing it to water. This modular protein has 3 redox cofactors, in other organisms the same activity requires 2 or 3 proteins. The polypeptide is Putative diflavin flavoprotein A 6 (dfa6) (Nostoc sp. (strain PCC 7120 / SAG 25.82 / UTEX 2576)).